Here is a 151-residue protein sequence, read N- to C-terminus: Large ribosomal subunit protein bL9 (151 aa).

It belongs to the bacterial ribosomal protein bL9 family.

Functionally, binds to the 23S rRNA. In Dehalococcoides mccartyi (strain ATCC BAA-2100 / JCM 16839 / KCTC 5957 / BAV1), this protein is Large ribosomal subunit protein bL9.